We begin with the raw amino-acid sequence, 485 residues long: Neuropeptide F receptor (485 aa).

The Extracellular portion of the chain corresponds to 1–91; it reads MIISMNQTEP…DSPWYHMLIS (91 aa). A helical membrane pass occupies residues 92–112; sequence MYGVLIVFGALGNTLVVIAVI. At 113–122 the chain is on the cytoplasmic side; sequence RKPIMRTARN. The helical transmembrane segment at 123–143 threads the bilayer; sequence LFILNLAISDLLLCLVTMPLT. Residues 144 to 163 lie on the Extracellular side of the membrane; sequence LMEILSKYWPYGSCSILCKT. Cys161 and Cys248 are oxidised to a cystine. The chain crosses the membrane as a helical span at residues 164-184; sequence IAMLQALCIFVSTISITAIAF. Over 185–202 the chain is Cytoplasmic; that stretch reads DRYQVIVYPTRDSLQFVG. A helical transmembrane segment spans residues 203 to 223; that stretch reads AVTILAGIWALALLLASPLFV. The Extracellular portion of the chain corresponds to 224 to 262; that stretch reads YKELINTDTPALLQQIGLQDTIPYCIEDWPSRNGRFYYS. Residues 263 to 283 traverse the membrane as a helical segment; that stretch reads IFSLCVQYLVPILIVSVAYFG. Residues 284–317 are Cytoplasmic-facing; sequence IYNKLKSRITVVAVQASSAQRKVERGRRMKRTNC. A helical membrane pass occupies residues 318-338; the sequence is LLISIAIIFGVSWLPLNFFNL. Over 339 to 355 the chain is Extracellular; sequence YADMERSPVTQSMLVRY. The chain crosses the membrane as a helical span at residues 356–376; it reads AICHMIGMSSACSNPLLYGWL. Over 377 to 485 the chain is Cytoplasmic; the sequence is NDNFRKEFQE…PSEVTKLMPR (109 aa).

It belongs to the G-protein coupled receptor 1 family. Expressed in midgut, brain lobes and ventral nerve cord of larvae. In adults, expressed in a pair of dorsolateral neurons in the protocerebrum, and the central complex and a small number of neurons in the subesophageal ganglion (at protein level). Expressed in a subset of sugar-responsive PAIN neurons in the thoracic body but is absent from other peripheral PAIN neurons.

The protein resides in the membrane. In terms of biological role, receptor for NPF. Integral part of the sensory system that mediates food signaling, providing the neural basis for the regulation of food response; coordinates larval foraging and social behavior changes during development. Required in dopaminergic (DA) neurons that innervate the mushroom body for satiety to suppress appetitive memory performance; a key factor in the internal state of hunger in the brain. NPF neurons coordinately modulate diverse sensory and motor neurons important for feeding, flight, and locomotion. NPF/NPFR pathway exerts its suppressive effect on larval aversion to diverse stressful stimuli (chemical stress and noxious heat) through attenuation of TRP channel-induced neuronal excitation. NPF neural signaling system plays a physiological role in acute modulation of alcohol sensitivity in adults, rather than a general response to intoxication by sedative agents. Activation and inhibition of the NPF system reduces and enhances ethanol preference, respectively. Sexual experience, the NPF system activity and ethanol consumption are all linked; sexual deprivation is a major contributor to enhanced ethanol preference. In Drosophila melanogaster (Fruit fly), this protein is Neuropeptide F receptor.